The primary structure comprises 290 residues: Short-chain dehydrogenase srdE (290 aa).

Residues I11, T37, D58, and N86 each coordinate NADP(+). Residues 125 to 145 (LIASSGIIVNIGSIGGVVPFV) form a helical membrane-spanning segment. Y150 contacts NADP(+). Y150 acts as the Proton donor in catalysis. A glycan (N-linked (GlcNAc...) asparagine) is linked at N151. NADP(+) contacts are provided by K154, V183, and T185. The Lowers pKa of active site Tyr role is filled by K154.

This sequence belongs to the short-chain dehydrogenases/reductases (SDR) family.

It is found in the membrane. Its function is as follows. Short-chain dehydrogenase; part of the gene cluster that mediates the biosynthesis of sordarial, a salicylic aldehyde structurally related to the phytotoxin pyriculol. The most interesting aspect of this pathway is formation of an aromatic product from the highly reducing polyketide synthase srdA. SrdA synthesizes a reduced polyketide chain from one molecule of acetyl-CoA and five molecules of malonyl-CoA. The polyketide chain is then reductively released as an aldehyde. The oxidoreductases srdC, srdD and srdE then oxidize one of the hydroxy groups to facilitate the intramolecular aldol condensation, followed by dehydration to yield a salicylic aldehyde. This aldehyde can undergo facile reduction by endogenous reductases to yield the alcohol 1-hydroxy-2-hydroxymethyl-3-pent-1,3-dienylbenzene. The flavin-dependent srdI counteract against the propensity of the aldehydes to be reduced under physiological conditions and is responsible for reoxidizing 1-hydroxy-2-hydroxymethyl-3-pent-1,3-dienylbenzene back to the salicylic aldehyde. This salicylic aldehyde is then selectively epoxidized by the cupin-domain-containing oxidoreductase srdB to yield the epoxide, which can be hydrolyzed stereoselectively by the hydrolase srdG to give the final product sordarial. The protein is Short-chain dehydrogenase srdE of Neurospora crassa (strain ATCC 24698 / 74-OR23-1A / CBS 708.71 / DSM 1257 / FGSC 987).